The following is a 1156-amino-acid chain: Protein hu-li tai shao (1156 aa).

A disordered region spans residues 1–36; it reads MTEVEQPPQNGIDPTAGEDDDNSKARPADIEQDMRE. Basic and acidic residues predominate over residues 22 to 36; it reads NSKARPADIEQDMRE. Serine 478 is subject to Phosphoserine. Phosphothreonine is present on residues threonine 480 and threonine 498. A Phosphoserine modification is found at serine 603. Tyrosine 608 is modified (phosphotyrosine). Threonine 609 and threonine 611 each carry phosphothreonine. Serine 614 carries the post-translational modification Phosphoserine. Tyrosine 627 bears the Phosphotyrosine mark. Serine 630 is subject to Phosphoserine. The tract at residues 897–956 is disordered; the sequence is FLPSNHALPKDTDANNRDQTDRERPEAEQEESFHCAGDSGIGDSTGRRPRLATTSNDSSI. Residues 904 to 929 are compositionally biased toward basic and acidic residues; sequence LPKDTDANNRDQTDRERPEAEQEESF.

The protein belongs to the aldolase class II family. Adducin subfamily. Isoform C is expressed in nurse cells. Isoform A is produced in the nurse cell but transported into the oocyte at stage 1, localizes to the oocyte cortex at stage 8 and to the anterior pole from day 9 onwards. Isoform B is expressed in the somatic follicle cells that surround the germline.

The protein resides in the cytoplasm. Its subcellular location is the cytoskeleton. It localises to the cell membrane. Its function is as follows. Required for assembling actin at ring canals in developing egg chambers. Probably interacts with other developmental proteins involved in nurse cell/oocyte transport through the ring canals. Important for normal neuromotor function. The sequence is that of Protein hu-li tai shao (hts) from Drosophila melanogaster (Fruit fly).